A 396-amino-acid chain; its full sequence is Phosphoglycerate kinase (396 aa).

Residues 21 to 23, arginine 36, 59 to 62, arginine 119, and arginine 156 contribute to the substrate site; these read DFN and HLGK. ATP contacts are provided by residues lysine 206, glycine 294, glutamate 325, and 352 to 355; that span reads GGDS.

This sequence belongs to the phosphoglycerate kinase family. Monomer.

Its subcellular location is the cytoplasm. It catalyses the reaction (2R)-3-phosphoglycerate + ATP = (2R)-3-phospho-glyceroyl phosphate + ADP. It functions in the pathway carbohydrate degradation; glycolysis; pyruvate from D-glyceraldehyde 3-phosphate: step 2/5. This chain is Phosphoglycerate kinase, found in Listeria monocytogenes serotype 4b (strain CLIP80459).